The primary structure comprises 642 residues: Forkhead box protein K2 (642 aa).

Residues 30-91 form the FHA domain; sequence VTIGRNSSQG…NGVFVDGVFQ (62 aa). A disordered region spans residues 201–221; that stretch reads QSENDKDASGGDSPKDDSKPP. Over residues 203–219 the composition is skewed to basic and acidic residues; that stretch reads ENDKDASGGDSPKDDSK. A DNA-binding region (fork-head) is located at residues 219–314; sequence KPPYSYAQLI…EQAFRKRRPR (96 aa). A DNA-binding; major groove region spans residues 261–279; sequence KGWQNSIRHNLSLNRYFIK. The Mg(2+) site is built by Leu271, Ser272, Asn274, and Phe277. 2 DNA-binding; minor groove regions span residues 289–293 and 309–314; these read KGSFW and RKRRPR. 2 disordered regions span residues 323–359 and 589–615; these read LGPL…REGS and ASAS…KTDE. Polar residues-rich tracts occupy residues 327 to 353 and 589 to 605; these read SSRS…TPES and ASAS…QSEQ. Over residues 606-615 the composition is skewed to basic and acidic residues; the sequence is PDIKRGKTDE.

In terms of tissue distribution, in neurula embryos, expressed strongly in the future floor plate and weakly in the neural crest progenitor cells. As development progresses, expression becomes stronger in neural crest cells. At stage 24, expressed in the eye, brain, branchial arches and in the presomitic mesoderm in the posterior embryo. At stage 29, additionally expressed in the pronephric tubules. At stage 35, expressed in the migrating lateral muscle precursors of the abdomen. Additionally, the developing proctodeum and head structures including the branchial arches, eyes and otic vesicles continue to show expression. Expression also persists in the nephros.

Its subcellular location is the nucleus. The protein localises to the cytoplasm. Transcriptional regulator involved in different processes such as glucose metabolism, aerobic glycolysis and autophagy. Recognizes and binds the forkhead DNA sequence motif (5'-GTAAACA-3') and can both act as a transcription activator or repressor, depending on the context. Acts as a key regulator of metabolic reprogramming towards aerobic glycolysis, a process in which glucose is converted to lactate in the presence of oxygen. Acts as a negative regulator of autophagy in skeletal muscle: in response to starvation, enters the nucleus, binds the promoters of autophagy genes and represses their expression, preventing proteolysis of skeletal muscle proteins. The polypeptide is Forkhead box protein K2 (Xenopus laevis (African clawed frog)).